The following is a 265-amino-acid chain: Aquaporin-5 (265 aa).

At methionine 1–lysine 12 the chain is on the cytoplasmic side. Residues alanine 13–leucine 33 traverse the membrane as a helical segment. The Extracellular portion of the chain corresponds to lysine 34 to methionine 39. The helical transmembrane segment at proline 40–leucine 60 threads the bilayer. At glycine 61–glycine 65 the chain is on the cytoplasmic side. Residues glycine 66–leucine 74 constitute an intramembrane region (discontinuously helical). Residues asparagine 69–alanine 71 carry the NPA 1 motif. The Cytoplasmic segment spans residues alanine 75–alanine 87. A helical transmembrane segment spans residues valine 88–leucine 108. The Extracellular portion of the chain corresponds to alanine 109–threonine 126. Asparagine 124 and asparagine 125 each carry an N-linked (GlcNAc...) asparagine glycan. The chain crosses the membrane as a helical span at residues threonine 127 to phenylalanine 147. At serine 148 to valine 158 the chain is on the cytoplasmic side. The chain crosses the membrane as a helical span at residues glycine 159–phenylalanine 179. Threonine 180 is a topological domain (extracellular). The discontinuously helical intramembrane region spans glycine 181 to glycine 191. Residues asparagine 185–alanine 187 carry the NPA 2 motif. The Extracellular segment spans residues proline 192–histidine 203. The chain crosses the membrane as a helical span at residues tryptophan 204–leucine 224. The Cytoplasmic segment spans residues leucine 225–histidine 265.

It belongs to the MIP/aquaporin (TC 1.A.8) family. As to quaternary structure, homotetramer; each monomer provides an independent water pore. Interacts with TRPV4; the interaction is probably indirect and regulates TRPV4 activation by hypotonicity.

Its subcellular location is the apical cell membrane. The protein resides in the cell membrane. It is found in the cytoplasmic vesicle membrane. It catalyses the reaction H2O(in) = H2O(out). Functionally, aquaporins form homotetrameric transmembrane channels, with each monomer independently mediating water transport across the plasma membrane along its osmotic gradient. Plays an important role in fluid secretion in salivary glands. Required for TRPV4 activation by hypotonicity. Together with TRPV4, controls regulatory volume decrease in salivary epithelial cells. Seems to play a redundant role in water transport in the eye, lung and in sweat glands. This Ovis aries (Sheep) protein is Aquaporin-5.